The sequence spans 239 residues: 7-cyano-7-deazaguanine synthase (239 aa).

ATP is bound at residue 8–18 (FSGGLDSTACL). Residues Cys-194, Cys-209, Cys-212, and Cys-215 each contribute to the Zn(2+) site.

This sequence belongs to the QueC family. Zn(2+) is required as a cofactor.

The catalysed reaction is 7-carboxy-7-deazaguanine + NH4(+) + ATP = 7-cyano-7-deazaguanine + ADP + phosphate + H2O + H(+). Its pathway is purine metabolism; 7-cyano-7-deazaguanine biosynthesis. Catalyzes the ATP-dependent conversion of 7-carboxy-7-deazaguanine (CDG) to 7-cyano-7-deazaguanine (preQ(0)). The protein is 7-cyano-7-deazaguanine synthase of Pyrococcus horikoshii (strain ATCC 700860 / DSM 12428 / JCM 9974 / NBRC 100139 / OT-3).